A 414-amino-acid polypeptide reads, in one-letter code: COUP transcription factor 2 (414 aa).

The segment at 1–72 (MAMVVSTWRD…PGGPGSDKQQ (72 aa)) is disordered. The segment covering 27-37 (PPVPGPPPGAP) has biased composition (pro residues). Residues 38-57 (HTPQTPGQGGPASTPAQTAA) are compositionally biased toward low complexity. Phosphothreonine is present on T51. A compositionally biased stretch (gly residues) spans 58 to 67 (GGQGGPGGPG). Positions 76–151 (HIECVVCGDK…VGMRREAVQR (76 aa)) form a DNA-binding region, nuclear receptor. NR C4-type zinc fingers lie at residues 79–99 (CVVCGDKSSGKHYGQFTCEGC) and 115–139 (CRANRNCPIDQHHRNQCQYCRLKKC). The interval 117–414 (ANRNCPIDQH…SFNWPYMAIQ (298 aa)) is interaction with ZFPM2. The 227-residue stretch at 177-403 (YLSGYISLLL…TLIRDMLLSG (227 aa)) folds into the NR LBD domain. The interval 337 to 414 (LQEKSQCALE…SFNWPYMAIQ (78 aa)) is important for dimerization.

This sequence belongs to the nuclear hormone receptor family. NR2 subfamily. Interacts with SQSTM1. Binds DNA as a dimer; homodimer or heterodimer with NR2F6. Interacts with NCOA1, NCOA2, NCOA3 and PPARGC1A. Interacts with ZFPM2. In terms of tissue distribution, ubiquitous. Expressed in the stromal cells of developing fetal ovaries.

The protein resides in the nucleus. In terms of biological role, ligand-activated transcription factor. Activated by high concentrations of 9-cis-retinoic acid and all-trans-retinoic acid, but not by dexamethasone, cortisol or progesterone (in vitro). Regulation of the apolipoprotein A-I gene transcription. Binds to DNA site A. May be required to establish ovary identity during early gonad development. The chain is COUP transcription factor 2 (NR2F2) from Homo sapiens (Human).